Here is a 546-residue protein sequence, read N- to C-terminus: Chaperonin GroEL (546 aa).

Residues 30–33, K51, 87–91, G415, 478–480, and D494 each bind ATP; these read TMGP, DGTTT, and NAA.

Belongs to the chaperonin (HSP60) family. As to quaternary structure, forms a cylinder of 14 subunits composed of two heptameric rings stacked back-to-back. Interacts with the co-chaperonin GroES.

It is found in the cytoplasm. The catalysed reaction is ATP + H2O + a folded polypeptide = ADP + phosphate + an unfolded polypeptide.. Together with its co-chaperonin GroES, plays an essential role in assisting protein folding. The GroEL-GroES system forms a nano-cage that allows encapsulation of the non-native substrate proteins and provides a physical environment optimized to promote and accelerate protein folding. This chain is Chaperonin GroEL, found in Wolinella succinogenes (strain ATCC 29543 / DSM 1740 / CCUG 13145 / JCM 31913 / LMG 7466 / NCTC 11488 / FDC 602W) (Vibrio succinogenes).